A 310-amino-acid polypeptide reads, in one-letter code: Proline iminopeptidase (310 aa).

The AB hydrolase-1 domain maps to 41–288 (LVTLHGGPGG…NSSHMAMWEE (248 aa)). Serine 116 serves as the catalytic Nucleophile. The active site involves aspartate 255. Residue histidine 282 is the Proton donor of the active site.

It belongs to the peptidase S33 family. Part of the tricorn proteolytic complex.

It carries out the reaction Release of N-terminal proline from a peptide.. Functionally, cleaves H-Pro-AMC as well as a wide spectrum of amino acid substrates and several peptide substrates without a proline at the N-terminus. In conjunction with the three factors F1, F2 and F3, Tricorn degrades oligopeptides in a sequential manner, yielding free amino acids. The protein is Proline iminopeptidase (pip) of Saccharolobus solfataricus (strain ATCC 35092 / DSM 1617 / JCM 11322 / P2) (Sulfolobus solfataricus).